We begin with the raw amino-acid sequence, 130 residues long: Small ribosomal subunit protein uS9 (130 aa).

The segment at 111 to 130 (VERKKVGLHKARRATQFSKR) is disordered. The segment covering 116–130 (VGLHKARRATQFSKR) has biased composition (basic residues).

This sequence belongs to the universal ribosomal protein uS9 family.

The sequence is that of Small ribosomal subunit protein uS9 from Xylella fastidiosa (strain M23).